A 147-amino-acid chain; its full sequence is MKIIIQRVNQASVSIEDDVVGSIEKGLVLLVGIAPEDTTEDIAYAVRKITSMRIFSDDEGKMNLSIQDIKGSVLSISQFTLFADTKKGNRPAFTGAADPVKANQFYDIFNQELANHVSVETGQFGADMQVSLINDGPVTIVLDTKNK.

The short motif at 136–137 (GP) is the Gly-cisPro motif, important for rejection of L-amino acids element.

Belongs to the DTD family. In terms of assembly, homodimer.

The protein localises to the cytoplasm. It carries out the reaction glycyl-tRNA(Ala) + H2O = tRNA(Ala) + glycine + H(+). The catalysed reaction is a D-aminoacyl-tRNA + H2O = a tRNA + a D-alpha-amino acid + H(+). Functionally, an aminoacyl-tRNA editing enzyme that deacylates mischarged D-aminoacyl-tRNAs. Also deacylates mischarged glycyl-tRNA(Ala), protecting cells against glycine mischarging by AlaRS. Acts via tRNA-based rather than protein-based catalysis; rejects L-amino acids rather than detecting D-amino acids in the active site. By recycling D-aminoacyl-tRNA to D-amino acids and free tRNA molecules, this enzyme counteracts the toxicity associated with the formation of D-aminoacyl-tRNA entities in vivo and helps enforce protein L-homochirality. The sequence is that of D-aminoacyl-tRNA deacylase from Streptococcus agalactiae serotype III (strain NEM316).